The chain runs to 301 residues: MKIAILSQDPKLYSTRRLREAAENRHHDVQVINFMRCYMNITSHQPFVIYQGQRLENFDAIIPRIGASATFYGTAVVRQFEVMGGFSANTSQAISRSRDKLRSLQILARKGIGLPVTGFAHATQDIDGLIETVGGAPVVIKLLEGTQGIGVVLAETHQAAKSVIEAFRGLDANILVQEYIAEAKGTDIRCFVVGEKVVAAMKRQGAEGEFRSNLHRGGKADKVRLTPEERSTAVRAAKAMGLRVAGVDLLRSNHGPLVMEINSSPGLEGIEKTTGVDVAGKIIEYLEKNAAPGKTTDRIQY.

An ATP-grasp domain is found at 104–287; it reads LQILARKGIG…VAGKIIEYLE (184 aa). Residues lysine 141, 178–179, aspartate 187, and 211–213 contribute to the ATP site; these read EY and RSN. Aspartate 248, glutamate 260, and asparagine 262 together coordinate Mg(2+). Residues aspartate 248, glutamate 260, and asparagine 262 each contribute to the Mn(2+) site.

It belongs to the RimK family. It depends on Mg(2+) as a cofactor. The cofactor is Mn(2+).

This Picosynechococcus sp. (strain ATCC 27264 / PCC 7002 / PR-6) (Agmenellum quadruplicatum) protein is Probable alpha-L-glutamate ligase.